Reading from the N-terminus, the 396-residue chain is Phosphopentomutase (396 aa).

The Mn(2+) site is built by Asp13, Asp288, His293, Asp329, His330, and His341.

This sequence belongs to the phosphopentomutase family. Mn(2+) is required as a cofactor.

It is found in the cytoplasm. It carries out the reaction 2-deoxy-alpha-D-ribose 1-phosphate = 2-deoxy-D-ribose 5-phosphate. The catalysed reaction is alpha-D-ribose 1-phosphate = D-ribose 5-phosphate. It participates in carbohydrate degradation; 2-deoxy-D-ribose 1-phosphate degradation; D-glyceraldehyde 3-phosphate and acetaldehyde from 2-deoxy-alpha-D-ribose 1-phosphate: step 1/2. Isomerase that catalyzes the conversion of deoxy-ribose 1-phosphate (dRib-1-P) and ribose 1-phosphate (Rib-1-P) to deoxy-ribose 5-phosphate (dRib-5-P) and ribose 5-phosphate (Rib-5-P), respectively. This is Phosphopentomutase from Clostridium beijerinckii (strain ATCC 51743 / NCIMB 8052) (Clostridium acetobutylicum).